We begin with the raw amino-acid sequence, 407 residues long: Leucine-rich repeat-containing protein 42 (407 aa).

5 LRR repeats span residues 138–159, 163–184, 191–211, 223–243, and 247–268; these read VLKS…EEIR, SLEC…FKYI, SLVK…QRLT, NLQL…RYLT, and TLQK…KGFF. Positions 360–389 are disordered; sequence VQSSPSGETHSTHKSRKRRLSTEEEQSAAP.

It belongs to the LRRC42 family.

The sequence is that of Leucine-rich repeat-containing protein 42 (lrrc42) from Danio rerio (Zebrafish).